We begin with the raw amino-acid sequence, 147 residues long: Large ribosomal subunit protein uL15 (147 aa).

A disordered region spans residues 1-62; the sequence is MKLHELKPAQ…GQQPLSRRMP (62 aa). Composition is skewed to gly residues over residues 21–31 and 42–52; these read RGIGSGTGKTS and AGGGVRPGFEG.

This sequence belongs to the universal ribosomal protein uL15 family. In terms of assembly, part of the 50S ribosomal subunit.

Functionally, binds to the 23S rRNA. The sequence is that of Large ribosomal subunit protein uL15 from Desulfitobacterium hafniense (strain DSM 10664 / DCB-2).